A 249-amino-acid chain; its full sequence is uncharacterized protein (249 aa).

The protein resides in the cytoplasm. The protein localises to the nucleus. This is an uncharacterized protein from Schizosaccharomyces pombe (strain 972 / ATCC 24843) (Fission yeast).